The following is a 124-amino-acid chain: Small ribosomal subunit protein uS12 (124 aa).

Residues 1-23 form a disordered region; that stretch reads MATINQLVRKPRRSKVTKSNSAA. At D89 the chain carries 3-methylthioaspartic acid.

It belongs to the universal ribosomal protein uS12 family. Part of the 30S ribosomal subunit. Contacts proteins S8 and S17. May interact with IF1 in the 30S initiation complex.

Its function is as follows. With S4 and S5 plays an important role in translational accuracy. Functionally, interacts with and stabilizes bases of the 16S rRNA that are involved in tRNA selection in the A site and with the mRNA backbone. Located at the interface of the 30S and 50S subunits, it traverses the body of the 30S subunit contacting proteins on the other side and probably holding the rRNA structure together. The combined cluster of proteins S8, S12 and S17 appears to hold together the shoulder and platform of the 30S subunit. This Pseudoalteromonas translucida (strain TAC 125) protein is Small ribosomal subunit protein uS12.